A 377-amino-acid chain; its full sequence is Mannan endo-1,4-beta-mannosidase A (377 aa).

Residues 1–18 form the signal peptide; the sequence is MKLSHMLLSLASLGVATA. W84 is a substrate binding site. N105 carries an N-linked (GlcNAc...) asparagine glycan. N197 lines the substrate pocket. E198 serves as the catalytic Proton donor. An N-linked (GlcNAc...) asparagine glycan is attached at N255. Y273 lines the substrate pocket. Residue E306 is the Nucleophile of the active site. Residue N326 is glycosylated (N-linked (GlcNAc...) asparagine). Residue W336 participates in substrate binding. N-linked (GlcNAc...) asparagine glycosylation occurs at N357.

The protein belongs to the glycosyl hydrolase 5 (cellulase A) family.

The protein localises to the secreted. The enzyme catalyses Random hydrolysis of (1-&gt;4)-beta-D-mannosidic linkages in mannans, galactomannans and glucomannans.. In terms of biological role, endo-1,4-mannanase, a crucial enzyme for depolymerization of seed galactomannans and wood galactoglucomannans. The sequence is that of Mannan endo-1,4-beta-mannosidase A (manA) from Aspergillus aculeatus.